Reading from the N-terminus, the 867-residue chain is Probable potassium transporter 15 (867 aa).

A compositionally biased stretch (low complexity) spans 1 to 13 (MAASSSSSASASA). The interval 1–88 (MAASSSSSAS…EGEGEDGEKQ (88 aa)) is disordered. Over 1–124 (MAASSSSSAS…DSEEFDFGRT (124 aa)) the chain is Cytoplasmic. Acidic residues predominate over residues 32-44 (TEEDDEGEEDGDT). Residues 45–54 (VEAAAAAVGA) are compositionally biased toward low complexity. Residues 63–84 (SEEEEDEEDGGGGGEGEGEGED) are compositionally biased toward acidic residues. A helical membrane pass occupies residues 125–145 (MFLALQTLAVVFGDIGISPLY). Residues 146–167 (TFDVMFSKYPILGEEDVLGALS) lie on the Extracellular side of the membrane. A helical membrane pass occupies residues 168–188 (LVLYTLISMPLVKYVLVVLWA). The Cytoplasmic portion of the chain corresponds to 189–252 (NDDGEGGIFA…KLESSLLLKK (64 aa)). A helical transmembrane segment spans residues 253–273 (LLLGLVLFGTAMFISNGVITP). Over 274-285 (AMSVLSAVSGLK) the chain is Extracellular. Residues 286–306 (VGIPNASQGLVVMISVVLLVI) form a helical membrane-spanning segment. Residues 307–317 (LYSVQRYATSK) are Cytoplasmic-facing. Residues 318–338 (MGFALGPSLLIWFCCLGGIGI) form a helical membrane-spanning segment. At 339–365 (YNLSTYGPAAFKAFNPLYIIYYFGRNP) the chain is on the extracellular side. An N-linked (GlcNAc...) asparagine glycan is attached at asparagine 340. Residues 366–386 (FQAWLSLAGCLLCATGSEAIF) form a helical membrane-spanning segment. Residues 387–400 (ANLSYFPVRYVQSM) are Cytoplasmic-facing. A helical membrane pass occupies residues 401-421 (FALLVLPCLVLAYLGQGAFLI). Topologically, residues 422 to 433 (ANQNSSEQIFFS) are extracellular. Asparagine 425 is a glycosylation site (N-linked (GlcNAc...) asparagine). A helical transmembrane segment spans residues 434–454 (SIPSGVFWPVFLIANLAALIA). The Cytoplasmic segment spans residues 455-490 (SRTMTTAIFQCLKQSIALGCFPRLKIIHTSRKFMAK). The chain crosses the membrane as a helical span at residues 491 to 511 (IYIPVVNWFLLFSCLGFILLF). Residues 512 to 522 (RSIYDVGNAYA) are Extracellular-facing. Residues 523 to 543 (IAELGVMIMATVYVTIIMLLI) traverse the membrane as a helical segment. Residues 544-545 (WE) are Cytoplasmic-facing. A helical membrane pass occupies residues 546-566 (TSIVKVLSFVITFLSLELVFF). Residues 567–572 (SSSLSS) lie on the Extracellular side of the membrane. The chain crosses the membrane as a helical span at residues 573 to 593 (VGDGGWALIIFASGILMVMFI). The Cytoplasmic portion of the chain corresponds to 594-867 (WNYGSKLKYD…VMQVRLTSYV (274 aa)).

The protein belongs to the HAK/KUP transporter (TC 2.A.72.3) family.

The protein resides in the membrane. Functionally, high-affinity potassium transporter. The chain is Probable potassium transporter 15 (HAK15) from Oryza sativa subsp. japonica (Rice).